The chain runs to 409 residues: Multifunctional CCA protein (409 aa).

2 residues coordinate ATP: G8 and R11. CTP contacts are provided by G8 and R11. The Mg(2+) site is built by D21 and D23. ATP is bound by residues R91, R137, and R140. CTP is bound by residues R91, R137, and R140. Positions 228–329 constitute an HD domain; the sequence is TGIHTLMVVE…ITLMDQNDAW (102 aa).

The protein belongs to the tRNA nucleotidyltransferase/poly(A) polymerase family. Bacterial CCA-adding enzyme type 1 subfamily. Monomer. Can also form homodimers and oligomers. Mg(2+) serves as cofactor. The cofactor is Ni(2+).

It catalyses the reaction a tRNA precursor + 2 CTP + ATP = a tRNA with a 3' CCA end + 3 diphosphate. It carries out the reaction a tRNA with a 3' CCA end + 2 CTP + ATP = a tRNA with a 3' CCACCA end + 3 diphosphate. Functionally, catalyzes the addition and repair of the essential 3'-terminal CCA sequence in tRNAs without using a nucleic acid template. Adds these three nucleotides in the order of C, C, and A to the tRNA nucleotide-73, using CTP and ATP as substrates and producing inorganic pyrophosphate. tRNA 3'-terminal CCA addition is required both for tRNA processing and repair. Also involved in tRNA surveillance by mediating tandem CCA addition to generate a CCACCA at the 3' terminus of unstable tRNAs. While stable tRNAs receive only 3'-terminal CCA, unstable tRNAs are marked with CCACCA and rapidly degraded. This Psychromonas ingrahamii (strain DSM 17664 / CCUG 51855 / 37) protein is Multifunctional CCA protein.